Here is a 173-residue protein sequence, read N- to C-terminus: Crossover junction endodeoxyribonuclease RuvC (173 aa).

Active-site residues include Asp-8, Glu-68, and Asp-140. Mg(2+)-binding residues include Asp-8, Glu-68, and Asp-140.

This sequence belongs to the RuvC family. As to quaternary structure, homodimer which binds Holliday junction (HJ) DNA. The HJ becomes 2-fold symmetrical on binding to RuvC with unstacked arms; it has a different conformation from HJ DNA in complex with RuvA. In the full resolvosome a probable DNA-RuvA(4)-RuvB(12)-RuvC(2) complex forms which resolves the HJ. It depends on Mg(2+) as a cofactor.

It is found in the cytoplasm. It catalyses the reaction Endonucleolytic cleavage at a junction such as a reciprocal single-stranded crossover between two homologous DNA duplexes (Holliday junction).. In terms of biological role, the RuvA-RuvB-RuvC complex processes Holliday junction (HJ) DNA during genetic recombination and DNA repair. Endonuclease that resolves HJ intermediates. Cleaves cruciform DNA by making single-stranded nicks across the HJ at symmetrical positions within the homologous arms, yielding a 5'-phosphate and a 3'-hydroxyl group; requires a central core of homology in the junction. The consensus cleavage sequence is 5'-(A/T)TT(C/G)-3'. Cleavage occurs on the 3'-side of the TT dinucleotide at the point of strand exchange. HJ branch migration catalyzed by RuvA-RuvB allows RuvC to scan DNA until it finds its consensus sequence, where it cleaves and resolves the cruciform DNA. This Saccharophagus degradans (strain 2-40 / ATCC 43961 / DSM 17024) protein is Crossover junction endodeoxyribonuclease RuvC.